The primary structure comprises 638 residues: Protein disulfide-isomerase A4 (638 aa).

The signal sequence occupies residues M1 to A20. Thioredoxin domains follow at residues A21–Q162 and Q162–K294. The tract at residues A24–E50 is disordered. Over residues S32 to E50 the composition is skewed to acidic residues. N-linked (GlcNAc...) asparagine glycosylation is present at N36. Residues C84–C87 carry the CXXC motif. Cystine bridges form between C84/C87 and C199/C202. K359 carries the N6-acetyllysine modification. The Thioredoxin 3 domain occupies F498 to T629. A CXXC motif is present at residues C548–C551. A disulfide bridge connects residues C548 and C551. Positions K635–L638 match the Prevents secretion from ER motif.

It belongs to the protein disulfide isomerase family. Part of a large chaperone multiprotein complex comprising DNAJB11, HSP90B1, HSPA5, HYOU, PDIA2, PDIA4, PDIA6, PPIB, SDF2L1, UGGT1 and very small amounts of ERP29, but not, or at very low levels, CALR nor CANX. Component of a complex containing at least CRELD2, MANF, MATN3 and PDIA4.

It localises to the endoplasmic reticulum lumen. The protein localises to the melanosome. It catalyses the reaction Catalyzes the rearrangement of -S-S- bonds in proteins.. The protein is Protein disulfide-isomerase A4 (Pdia4) of Mus musculus (Mouse).